Reading from the N-terminus, the 350-residue chain is Nicotinate-nucleotide--dimethylbenzimidazole phosphoribosyltransferase (350 aa).

Glu316 functions as the Proton acceptor in the catalytic mechanism.

It belongs to the CobT family.

The enzyme catalyses 5,6-dimethylbenzimidazole + nicotinate beta-D-ribonucleotide = alpha-ribazole 5'-phosphate + nicotinate + H(+). It participates in nucleoside biosynthesis; alpha-ribazole biosynthesis; alpha-ribazole from 5,6-dimethylbenzimidazole: step 1/2. Functionally, catalyzes the synthesis of alpha-ribazole-5'-phosphate from nicotinate mononucleotide (NAMN) and 5,6-dimethylbenzimidazole (DMB). The chain is Nicotinate-nucleotide--dimethylbenzimidazole phosphoribosyltransferase from Pseudomonas savastanoi pv. phaseolicola (strain 1448A / Race 6) (Pseudomonas syringae pv. phaseolicola (strain 1448A / Race 6)).